The following is a 120-amino-acid chain: ATP-dependent Clp protease adapter protein ClpS (120 aa).

This sequence belongs to the ClpS family. In terms of assembly, binds to the N-terminal domain of the chaperone ClpA.

In terms of biological role, involved in the modulation of the specificity of the ClpAP-mediated ATP-dependent protein degradation. This Pseudomonas savastanoi pv. phaseolicola (strain 1448A / Race 6) (Pseudomonas syringae pv. phaseolicola (strain 1448A / Race 6)) protein is ATP-dependent Clp protease adapter protein ClpS.